We begin with the raw amino-acid sequence, 463 residues long: Glutamate--tRNA ligase (463 aa).

A 'HIGH' region motif is present at residues 10–20; it reads PSPTGHLHIGG. Residues 236-240 carry the 'KMSKS' region motif; that stretch reads KLSKR. Lys239 lines the ATP pocket.

This sequence belongs to the class-I aminoacyl-tRNA synthetase family. Glutamate--tRNA ligase type 1 subfamily. Monomer.

The protein resides in the cytoplasm. It carries out the reaction tRNA(Glu) + L-glutamate + ATP = L-glutamyl-tRNA(Glu) + AMP + diphosphate. Its function is as follows. Catalyzes the attachment of glutamate to tRNA(Glu) in a two-step reaction: glutamate is first activated by ATP to form Glu-AMP and then transferred to the acceptor end of tRNA(Glu). This chain is Glutamate--tRNA ligase, found in Nitratidesulfovibrio vulgaris (strain ATCC 29579 / DSM 644 / CCUG 34227 / NCIMB 8303 / VKM B-1760 / Hildenborough) (Desulfovibrio vulgaris).